The sequence spans 131 residues: Small ribosomal subunit protein uS8 (131 aa).

It belongs to the universal ribosomal protein uS8 family. In terms of assembly, part of the 30S ribosomal subunit. Contacts proteins S5 and S12.

Functionally, one of the primary rRNA binding proteins, it binds directly to 16S rRNA central domain where it helps coordinate assembly of the platform of the 30S subunit. The polypeptide is Small ribosomal subunit protein uS8 (Clostridium novyi (strain NT)).